A 169-amino-acid polypeptide reads, in one-letter code: Der GTPase-activating protein YihI (169 aa).

Disordered stretches follow at residues 1 to 92 (MKPS…EKPM) and 146 to 169 (SYDD…LRGN). The segment covering 10–19 (SKGHAKARRK) has biased composition (basic residues). The span at 20 to 30 (TREELDQEARD) shows a compositional bias: basic and acidic residues. A compositionally biased stretch (basic residues) spans 31 to 40 (RKRQKKRRGH). Residues 49–58 (GNTTSGSKGQ) are compositionally biased toward polar residues. Over residues 147–159 (YDDDEEEEEDEKQ) the composition is skewed to acidic residues. The segment covering 160–169 (EDMMRLLRGN) has biased composition (basic and acidic residues).

Belongs to the YihI family. In terms of assembly, interacts with Der.

Its function is as follows. A GTPase-activating protein (GAP) that modifies Der/EngA GTPase function. May play a role in ribosome biogenesis. This chain is Der GTPase-activating protein YihI, found in Escherichia coli O1:K1 / APEC.